The following is a 695-amino-acid chain: C6 finger domain transcription factor nscR (695 aa).

Residues 17 to 43 (CELCRERKVKCDKLDPCTNCASAGVVC) constitute a DNA-binding region (zn(2)-C6 fungal-type). Positions 101-113 (SMRSSASQSSNQD) are enriched in low complexity. The segment at 101 to 146 (SMRSSASQSSNQDQESRDAIESISNETEDASAPTPDSSRMPLGDGG) is disordered.

Its subcellular location is the nucleus. Functionally, transcription factor that specifically regulates the neosartoricin B biosynthesis gene cluster. The chain is C6 finger domain transcription factor nscR from Arthroderma otae (strain ATCC MYA-4605 / CBS 113480) (Microsporum canis).